Reading from the N-terminus, the 316-residue chain is Olfactory receptor 56B2 (316 aa).

Residues 1–32 lie on the Extracellular side of the membrane; sequence MVLQELRDSNSSKFQVSEFILMGFPGIHSWQH. N-linked (GlcNAc...) asparagine glycosylation occurs at asparagine 10. Residues 33–53 form a helical membrane-spanning segment; it reads WLSLPLALLYLLALSANILIL. The Cytoplasmic segment spans residues 54–61; that stretch reads IIINKEAA. A helical membrane pass occupies residues 62 to 82; it reads LHQPMYYFLGILAMADIGLAT. At 83-106 the chain is on the extracellular side; it reads TIMPKILAILWFNAKTISLLECFA. Cysteine 104 and cysteine 196 are disulfide-bonded. The chain crosses the membrane as a helical span at residues 107–127; the sequence is QMYAIHCFVAMESSTFVCMAI. Topologically, residues 128–146 are cytoplasmic; it reads DRYVAICRPLRYPSIITES. The chain crosses the membrane as a helical span at residues 147–167; sequence FVFKANGFMALRNSLCLISVP. Residues 168 to 203 are Extracellular-facing; that stretch reads LLAAQRHYCSQNQIEHCLCSNLGVTSLSCDDRRINS. A helical transmembrane segment spans residues 204–224; sequence INQVLLAWTLMGSDLGLIILS. The Cytoplasmic segment spans residues 225-244; sequence YALILYSVLKLNSPEAASKA. Residues 245–265 traverse the membrane as a helical segment; it reads LSTCTSHLILILFFYTVIIVI. The Extracellular portion of the chain corresponds to 266–279; sequence SITRSTGMRVPLIP. The chain crosses the membrane as a helical span at residues 280-300; it reads VLLNVLHNVIPPALNPMVYAL. Residues 301 to 316 are Cytoplasmic-facing; sequence KNKELRQGLYKVLRLE.

Belongs to the G-protein coupled receptor 1 family.

The protein resides in the cell membrane. Its function is as follows. Odorant receptor. In Homo sapiens (Human), this protein is Olfactory receptor 56B2.